The primary structure comprises 118 residues: Vesicle-associated membrane protein 1 (118 aa).

Residues 1-15 show a composition bias toward low complexity; sequence MSAPAQPPAEGTEGA. Residues 1–38 are disordered; sequence MSAPAQPPAEGTEGAAPGGGPPGPPPNTTSNRRLQQTQ. The Cytoplasmic portion of the chain corresponds to 1–96; that stretch reads MSAPAQPPAE…KRKYWWKNCK (96 aa). A compositionally biased stretch (polar residues) spans 28–38; the sequence is TTSNRRLQQTQ. Residues 33 to 93 enclose the v-SNARE coiled-coil homology domain; sequence RLQQTQAQVE…AKLKRKYWWK (61 aa). The residue at position 63 (S63) is a Phosphoserine. The chain crosses the membrane as a helical; Anchor for type IV membrane protein span at residues 97–116; the sequence is MMIMLGAICAIIVVVIVIYI. Over 117–118 the chain is Vesicular; sequence FT.

Belongs to the synaptobrevin family. As to quaternary structure, interacts with VAPA and VAPB. Post-translationally, (Microbial infection) Targeted and hydrolyzed by C.botulinum neurotoxin type D (BoNT/D, botD) which hydrolyzes the 61-Lys-|-Leu-62 bond and inhibits neurotransmitter release. This is a poor substrate for BoNT/D, high concentrations are required to cleave it in vitro. (Microbial infection) Targeted and hydrolyzed by C.botulinum neurotoxin type F (BoNT/F, botF) which hydrolyzes the 60-Gln-|-Lys-61 bond and inhibits neurotransmitter release. Expressed in brain and spleen (at protein level). Isoform 1 expressed at very high level in brain. Even higher level found in spinal cord. Isoform 3 expressed in kidney, spleen and liver. Isoforms 2 and 3 expressed in osteoblasts of trabecular bone. Also expressed in heart.

The protein resides in the cytoplasmic vesicle. It localises to the secretory vesicle. It is found in the synaptic vesicle membrane. The protein localises to the synapse. Its subcellular location is the synaptosome. The protein resides in the cytoplasmic vesicle membrane. It localises to the mitochondrion outer membrane. Its function is as follows. Involved in the targeting and/or fusion of transport vesicles to their target membrane. This is Vesicle-associated membrane protein 1 (Vamp1) from Rattus norvegicus (Rat).